A 361-amino-acid polypeptide reads, in one-letter code: 3-dehydroquinate synthase (361 aa).

Residues 71 to 76 (DGEQNK), 105 to 109 (GVIGD), 129 to 130 (TT), lysine 142, lysine 151, and 169 to 172 (CLNT) contribute to the NAD(+) site. Glutamate 184, histidine 247, and histidine 264 together coordinate Zn(2+).

This sequence belongs to the sugar phosphate cyclases superfamily. Dehydroquinate synthase family. Co(2+) is required as a cofactor. The cofactor is Zn(2+). It depends on NAD(+) as a cofactor.

The protein localises to the cytoplasm. The catalysed reaction is 7-phospho-2-dehydro-3-deoxy-D-arabino-heptonate = 3-dehydroquinate + phosphate. It functions in the pathway metabolic intermediate biosynthesis; chorismate biosynthesis; chorismate from D-erythrose 4-phosphate and phosphoenolpyruvate: step 2/7. In terms of biological role, catalyzes the conversion of 3-deoxy-D-arabino-heptulosonate 7-phosphate (DAHP) to dehydroquinate (DHQ). This chain is 3-dehydroquinate synthase, found in Sodalis glossinidius (strain morsitans).